A 296-amino-acid chain; its full sequence is Probable redox regulatory protein BQ2027_MB0506C (296 aa).

Belongs to the Rv0495c family.

Its function is as follows. Essential for maintaining intracellular redox homeostasis. The chain is Probable redox regulatory protein BQ2027_MB0506C from Mycobacterium bovis (strain ATCC BAA-935 / AF2122/97).